The following is a 174-amino-acid chain: MTTIRRFSCNDLLRFTSVNLDHLTETFNMSFYMTYLARWPDYFHVAEGPGNRVMGYIMGKVEGQGESWHGHVTAVTVSPEYRRQQLAKKLMNLLEDISDKIDKAYFVDLFVRASNTPAIKMYEKLGYIIYRRVLRYYSGEEDGLDMRKALSRDVEKKSVIPLKRPITPDELEYD.

In terms of domain architecture, N-acetyltransferase spans 2–151 (TTIRRFSCND…DGLDMRKALS (150 aa)).

The protein belongs to the acetyltransferase family. ARD1 subfamily.

It catalyses the reaction N-terminal L-methionyl-L-asparaginyl-[protein] + acetyl-CoA = N-terminal N(alpha)-acetyl-L-methionyl-L-asparaginyl-[protein] + CoA + H(+). It carries out the reaction N-terminal L-methionyl-L-glutaminyl-[protein] + acetyl-CoA = N-terminal N(alpha)-acetyl-L-methionyl-L-glutaminyl-[protein] + CoA + H(+). The catalysed reaction is N-terminal L-methionyl-L-aspartyl-[protein] + acetyl-CoA = N-terminal N(alpha)-acetyl-L-methionyl-L-aspartyl-[protein] + CoA + H(+). The enzyme catalyses N-terminal L-methionyl-L-glutamyl-[protein] + acetyl-CoA = N-terminal N(alpha)-acetyl-L-methionyl-L-glutamyl-[protein] + CoA + H(+). Functionally, catalytic subunit of the NatB N-alpha-acetyltransferase complex. Involved in plant immunity through the regulation of SNC1 stability. This chain is N-terminal acetyltransferase B complex catalytic subunit NAA20, found in Arabidopsis thaliana (Mouse-ear cress).